Here is a 514-residue protein sequence, read N- to C-terminus: MSKPNNQNQQNNQEQIPEDANELIAQLQAKLEDIVASGKQPYPNTFKRTDYAQDLQTAFEGISKQEIADNDAKGEKTQVNVAGRVMLNRGAFIVIQDMTGRIQLYVARKELDEETLADIKSLDLGDIVGVSGYIGRSGKGDLYVHIEEMQLLTKALRPMPNKFHGLADVEARYRNRHLDLMTNETTRDTFMVRSQVISGIRKFMLNERFMEVETPMMHPIPGGAVARPFVTHHNALDMPLYLRIAPELYLKRLVVGGFEKVFEINRSFRNEGVSTRHNPEFTMIEFYQAYADYHDLMDLTERLFNELATDILGTTEITYQEEDISLKAPFERLSMSNAIAKYAENFDMARINDRDYLAEYASTTLKQQVKDVFGVGKLQTIIFEETAEHQLRQPTFITEYPAETSPLARRSDDNPEITDRFELFVGGRELANGFSELNDPADQAERFLGQVAEKDAGDDEAMHFDAEYIEALSYGLPPTAGEGIGIDRLVMLLTDSASIRDVILFPHMRRKLEG.

Residues Glu422 and Glu429 each coordinate Mg(2+).

It belongs to the class-II aminoacyl-tRNA synthetase family. Homodimer. Mg(2+) is required as a cofactor.

Its subcellular location is the cytoplasm. The catalysed reaction is tRNA(Lys) + L-lysine + ATP = L-lysyl-tRNA(Lys) + AMP + diphosphate. The chain is Lysine--tRNA ligase from Psychrobacter arcticus (strain DSM 17307 / VKM B-2377 / 273-4).